The chain runs to 389 residues: Rhizopuspepsin-1 (389 aa).

The first 21 residues, 1-21 (MKFTLISSCVALAAMTLAVEA), serve as a signal peptide directing secretion. Positions 22 to 66 (APNGKKINIPLAKNNSYKPSAKNALNKALAKYNRRKVGSGGITTE) are cleaved as a propeptide — activation peptide. The 304-residue stretch at 82–385 (YYGEVTVGTP…NQEVPEVQIA (304 aa)) folds into the Peptidase A1 domain. Aspartate 100 is an active-site residue. A disulfide bridge connects residues cysteine 113 and cysteine 116. Aspartate 283 is a catalytic residue. Cysteines 317 and 350 form a disulfide.

Belongs to the peptidase A1 family.

The catalysed reaction is Hydrolysis of proteins with broad specificity similar to that of pepsin A, preferring hydrophobic residues at P1 and P1'. Clots milk and activates trypsinogen. Does not cleave 4-Gln-|-His-5, but does cleave 10-His-|-Leu-11 and 12-Val-|-Glu-13 in B chain of insulin.. The sequence is that of Rhizopuspepsin-1 (RNAP) from Rhizopus niveus.